The chain runs to 322 residues: ATP-dependent 6-phosphofructokinase (322 aa).

Position 12 (glycine 12) interacts with ATP. Residue 22-26 participates in ADP binding; it reads RATAK. Residues 73-74 and 103-106 contribute to the ATP site; these read RS and GDGS. Aspartate 104 contributes to the Mg(2+) binding site. 127-129 lines the substrate pocket; sequence TID. Residue aspartate 129 is the Proton acceptor of the active site. ADP is bound at residue arginine 156. Substrate is bound by residues arginine 164 and 171 to 173; that span reads MGR. Residues 187 to 189 and 215 to 217 contribute to the ADP site; these read GGD and KLH. Residues glutamate 224, arginine 245, and 251–254 each bind substrate; that span reads HIQR.

Belongs to the phosphofructokinase type A (PFKA) family. ATP-dependent PFK group I subfamily. Prokaryotic clade 'B1' sub-subfamily. Homotetramer. The cofactor is Mg(2+).

The protein resides in the cytoplasm. The catalysed reaction is beta-D-fructose 6-phosphate + ATP = beta-D-fructose 1,6-bisphosphate + ADP + H(+). The protein operates within carbohydrate degradation; glycolysis; D-glyceraldehyde 3-phosphate and glycerone phosphate from D-glucose: step 3/4. Its activity is regulated as follows. Allosterically activated by ADP and other diphosphonucleosides, and allosterically inhibited by phosphoenolpyruvate. Catalyzes the phosphorylation of D-fructose 6-phosphate to fructose 1,6-bisphosphate by ATP, the first committing step of glycolysis. This is ATP-dependent 6-phosphofructokinase from Fusobacterium nucleatum subsp. nucleatum (strain ATCC 25586 / DSM 15643 / BCRC 10681 / CIP 101130 / JCM 8532 / KCTC 2640 / LMG 13131 / VPI 4355).